We begin with the raw amino-acid sequence, 329 residues long: Sex comb on midleg-like protein 1 (329 aa).

Positions serine 136–cysteine 160 are disordered. Serine 138 and serine 238 each carry phosphoserine. In terms of domain architecture, SAM spans tryptophan 258–lysine 325.

It belongs to the SCM family.

The protein localises to the nucleus. Its function is as follows. Putative Polycomb group (PcG) protein. PcG proteins act by forming multiprotein complexes, which are required to maintain the transcriptionally repressive state of homeotic genes throughout development. May be involved in spermatogenesis during sexual maturation. The polypeptide is Sex comb on midleg-like protein 1 (SCML1) (Pongo pygmaeus (Bornean orangutan)).